Reading from the N-terminus, the 212-residue chain is Large ribosomal subunit protein uL3 (212 aa).

Position 153 is an N5-methylglutamine (Gln153).

The protein belongs to the universal ribosomal protein uL3 family. As to quaternary structure, part of the 50S ribosomal subunit. Forms a cluster with proteins L14 and L19. In terms of processing, methylated by PrmB.

One of the primary rRNA binding proteins, it binds directly near the 3'-end of the 23S rRNA, where it nucleates assembly of the 50S subunit. The sequence is that of Large ribosomal subunit protein uL3 from Shewanella pealeana (strain ATCC 700345 / ANG-SQ1).